The following is a 699-amino-acid chain: Elongation factor G (699 aa).

The tr-type G domain occupies 8-290; it reads ERYRNIGIMA…AVLDYLPSPV (283 aa). GTP-binding positions include 17–24, 88–92, and 142–145; these read AHIDAGKT, DTPGH, and NKMD.

Belongs to the TRAFAC class translation factor GTPase superfamily. Classic translation factor GTPase family. EF-G/EF-2 subfamily.

It is found in the cytoplasm. In terms of biological role, catalyzes the GTP-dependent ribosomal translocation step during translation elongation. During this step, the ribosome changes from the pre-translocational (PRE) to the post-translocational (POST) state as the newly formed A-site-bound peptidyl-tRNA and P-site-bound deacylated tRNA move to the P and E sites, respectively. Catalyzes the coordinated movement of the two tRNA molecules, the mRNA and conformational changes in the ribosome. In Acidithiobacillus ferrooxidans (strain ATCC 23270 / DSM 14882 / CIP 104768 / NCIMB 8455) (Ferrobacillus ferrooxidans (strain ATCC 23270)), this protein is Elongation factor G.